The following is a 563-amino-acid chain: Putative cysteine ligase BshC (563 aa).

Residues leucine 474–glutamate 506 adopt a coiled-coil conformation.

The protein belongs to the BshC family.

This chain is Putative cysteine ligase BshC, found in Prosthecochloris aestuarii (strain DSM 271 / SK 413).